The primary structure comprises 308 residues: UDP-N-acetylenolpyruvoylglucosamine reductase (308 aa).

The 165-residue stretch at 37–201 folds into the FAD-binding PCMH-type domain; the sequence is RVGGPAQVLF…TQATFRGTPG (165 aa). The active site involves R181. Over residues 216 to 233 the composition is skewed to polar residues; it reads SREATQPIKSRTGGSTFK. The segment at 216–236 is disordered; sequence SREATQPIKSRTGGSTFKNPP. The active-site Proton donor is S230. E300 is a catalytic residue.

The protein belongs to the MurB family. FAD is required as a cofactor.

The protein resides in the cytoplasm. The enzyme catalyses UDP-N-acetyl-alpha-D-muramate + NADP(+) = UDP-N-acetyl-3-O-(1-carboxyvinyl)-alpha-D-glucosamine + NADPH + H(+). It participates in cell wall biogenesis; peptidoglycan biosynthesis. In terms of biological role, cell wall formation. This Azorhizobium caulinodans (strain ATCC 43989 / DSM 5975 / JCM 20966 / LMG 6465 / NBRC 14845 / NCIMB 13405 / ORS 571) protein is UDP-N-acetylenolpyruvoylglucosamine reductase.